The following is a 348-amino-acid chain: Methylthioribose-1-phosphate isomerase (348 aa).

Residues 47-49 (RGA), Arg90, and Gln196 contribute to the substrate site. Asp237 (proton donor) is an active-site residue. 247–248 (NK) provides a ligand contact to substrate.

Belongs to the eIF-2B alpha/beta/delta subunits family. MtnA subfamily.

It catalyses the reaction 5-(methylsulfanyl)-alpha-D-ribose 1-phosphate = 5-(methylsulfanyl)-D-ribulose 1-phosphate. It participates in amino-acid biosynthesis; L-methionine biosynthesis via salvage pathway; L-methionine from S-methyl-5-thio-alpha-D-ribose 1-phosphate: step 1/6. Its function is as follows. Catalyzes the interconversion of methylthioribose-1-phosphate (MTR-1-P) into methylthioribulose-1-phosphate (MTRu-1-P). In Synechococcus sp. (strain ATCC 27144 / PCC 6301 / SAUG 1402/1) (Anacystis nidulans), this protein is Methylthioribose-1-phosphate isomerase.